The following is a 100-amino-acid chain: Small ribosomal subunit protein uS14c (100 aa).

It belongs to the universal ribosomal protein uS14 family. Part of the 30S ribosomal subunit.

The protein resides in the plastid. It localises to the chloroplast. In terms of biological role, binds 16S rRNA, required for the assembly of 30S particles. This chain is Small ribosomal subunit protein uS14c, found in Angiopteris evecta (Mule's foot fern).